The chain runs to 85 residues: Dual endothelin-1/VEGF signal peptide receptor (85 aa).

At 1–18 (MTMFKGSNEMKSRWNWGS) the chain is on the extracellular side. Residues 19–37 (ITCIICFTCVGSQLSMSSS) traverse the membrane as a helical segment. Residues 38 to 85 (KASNFSGPLQLYQRELEIFIVLTDVPNYRLIKENSHLHTTIVDQGRTV) are Cytoplasmic-facing.

N-glycosylated. As to expression, expressed in kidney. Expressed in endothelial cells.

The protein resides in the cell membrane. Functionally, dual receptor for both endothelin-1 and the signal sequence of vascular endothelial growth factor A. Does not act as a receptor for angiotensin-2. Does not bind the VEGFA mature protein. May play a role in angiogenesis with a significant role in cardiovascular and neural development. This is Dual endothelin-1/VEGF signal peptide receptor from Homo sapiens (Human).